The chain runs to 192 residues: Peptidyl-tRNA hydrolase (192 aa).

His17 provides a ligand contact to tRNA. The active-site Proton acceptor is His22. Positions 68, 70, and 116 each coordinate tRNA.

The protein belongs to the PTH family. Monomer.

The protein localises to the cytoplasm. It catalyses the reaction an N-acyl-L-alpha-aminoacyl-tRNA + H2O = an N-acyl-L-amino acid + a tRNA + H(+). In terms of biological role, hydrolyzes ribosome-free peptidyl-tRNAs (with 1 or more amino acids incorporated), which drop off the ribosome during protein synthesis, or as a result of ribosome stalling. Its function is as follows. Catalyzes the release of premature peptidyl moieties from peptidyl-tRNA molecules trapped in stalled 50S ribosomal subunits, and thus maintains levels of free tRNAs and 50S ribosomes. The polypeptide is Peptidyl-tRNA hydrolase (Xylella fastidiosa (strain 9a5c)).